The chain runs to 69 residues: Snake venom metalloproteinase BnP2 (69 aa).

The Peptidase M12B domain occupies 1-69; the sequence is YIELAVVADH…EWRERDIIPR (69 aa). Glu-3 is a binding site for Ca(2+).

This sequence belongs to the venom metalloproteinase (M12B) family. P-I subfamily. Monomer. Zn(2+) is required as a cofactor. In terms of tissue distribution, expressed by the venom gland.

The protein resides in the secreted. Its activity is regulated as follows. Inhibited by EDTA. Its function is as follows. This protein is a zinc protease from snake venom that is devoid of significant myotoxic and hemorrhagic activities. It hydrolyzes the Aalpha-chain and more slowly the Bbeta-chain of fibrin and fibrinogen, without affecting the gamma-chains. It induces cell detachment and a apoptosis (anoikis) in endothelial cells. The polypeptide is Snake venom metalloproteinase BnP2 (Bothrops pauloensis (Neuwied's lancehead)).